The primary structure comprises 401 residues: Tyrosine--tRNA ligase (401 aa).

The 'HIGH' region motif lies at 42–51; sequence PTAPDLHLGH. The 'KMSKS' region motif lies at 226–230; that stretch reads KMSKS. ATP is bound at residue Lys229. The 62-residue stretch at 336-397 folds into the S4 RNA-binding domain; the sequence is IALAQLLKQI…GKRRIAKLSI (62 aa).

Belongs to the class-I aminoacyl-tRNA synthetase family. TyrS type 2 subfamily. Homodimer.

The protein resides in the cytoplasm. It carries out the reaction tRNA(Tyr) + L-tyrosine + ATP = L-tyrosyl-tRNA(Tyr) + AMP + diphosphate + H(+). In terms of biological role, catalyzes the attachment of tyrosine to tRNA(Tyr) in a two-step reaction: tyrosine is first activated by ATP to form Tyr-AMP and then transferred to the acceptor end of tRNA(Tyr). The chain is Tyrosine--tRNA ligase from Legionella pneumophila (strain Paris).